The sequence spans 403 residues: High affinity transport system protein p37 (403 aa).

A signal peptide spans 1-23; it reads MLKKLKNFILFSSIFSPIAFAIS. C24 carries the N-palmitoyl cysteine lipid modification. C24 carries S-diacylglycerol cysteine lipidation.

It localises to the cell membrane. P37 is part of a high-affinity transport system. The protein is High affinity transport system protein p37 (p37) of Mesomycoplasma hyorhinis (Mycoplasma hyorhinis).